We begin with the raw amino-acid sequence, 256 residues long: Type III pantothenate kinase (256 aa).

6-13 (DCGNTNTV) lines the ATP pocket. 107 to 110 (GPDR) is a binding site for substrate. Asp-109 acts as the Proton acceptor in catalysis. Residue Asp-129 coordinates K(+). Thr-132 is an ATP binding site. Substrate is bound at residue Thr-184.

It belongs to the type III pantothenate kinase family. As to quaternary structure, homodimer. NH4(+) is required as a cofactor. It depends on K(+) as a cofactor.

Its subcellular location is the cytoplasm. It catalyses the reaction (R)-pantothenate + ATP = (R)-4'-phosphopantothenate + ADP + H(+). The protein operates within cofactor biosynthesis; coenzyme A biosynthesis; CoA from (R)-pantothenate: step 1/5. Its function is as follows. Catalyzes the phosphorylation of pantothenate (Pan), the first step in CoA biosynthesis. This chain is Type III pantothenate kinase, found in Dinoroseobacter shibae (strain DSM 16493 / NCIMB 14021 / DFL 12).